A 65-amino-acid chain; its full sequence is Subtilisin inhibitor CLSI-I (65 aa).

Belongs to the protease inhibitor I13 (potato type I serine protease inhibitor) family.

Functionally, inhibits subtilisin-type microbial serine proteases including proteinase K, subtilisin BPN', subtilisin Carlsberg, subtilisin E, A.oryzae protease and S.griseus alkaline protease. Weakly inhibits pronase E. Does not inhibit trypsin or chymotrypsin. The chain is Subtilisin inhibitor CLSI-I from Canavalia lineata (Beach bean).